The sequence spans 123 residues: NHL-repeat-containing protein 4 (123 aa).

NHL repeat units lie at residues 35–78 (QPLG…FPRA) and 79–119 (GPPI…YQGL).

This is NHL-repeat-containing protein 4 (NHLRC4) from Homo sapiens (Human).